We begin with the raw amino-acid sequence, 273 residues long: Large ribosomal subunit protein uL2 (273 aa).

Disordered stretches follow at residues 28-55 (TPEK…RHRG) and 222-273 (GMAM…SKRK). Positions 255–273 (YKTRKKRRVSDRFIVSKRK) are enriched in basic residues.

Belongs to the universal ribosomal protein uL2 family. As to quaternary structure, part of the 50S ribosomal subunit. Forms a bridge to the 30S subunit in the 70S ribosome.

One of the primary rRNA binding proteins. Required for association of the 30S and 50S subunits to form the 70S ribosome, for tRNA binding and peptide bond formation. It has been suggested to have peptidyltransferase activity; this is somewhat controversial. Makes several contacts with the 16S rRNA in the 70S ribosome. This chain is Large ribosomal subunit protein uL2, found in Treponema pallidum (strain Nichols).